Here is a 578-residue protein sequence, read N- to C-terminus: ER degradation-enhancing alpha-mannosidase-like protein 2 (578 aa).

A signal peptide spans 1–21 (MPFRLLIPLGLLCALLPQHHG). N-linked (GlcNAc...) asparagine glycosylation is found at N90, N112, N289, and N450. The disordered stretch occupies residues 517 to 557 (KNTVSSGPWEPPARPGTLFSPENHDQARERKPAKQKVPLLS). The segment covering 538-548 (ENHDQARERKP) has biased composition (basic and acidic residues).

It belongs to the glycosyl hydrolase 47 family. Post-translationally, N-glycosylated. In terms of tissue distribution, expressed ubiquitously in all tissues tested with slightly higher levels detected in small intestine and peripheral blood leukocytes and weakest levels in brain and skeletal muscle.

Its subcellular location is the endoplasmic reticulum lumen. Functionally, involved in the endoplasmic reticulum-associated degradation (ERAD) pathway that targets misfolded glycoproteins for degradation in an N-glycan-dependent manner. May initiate ERAD by promoting the first mannose trimming step of ERAD substrates, from Man9GlcNAc2 to Man8GlcNAc2. Seems to recognize and bind to exposed hydrophobic regions in target proteins. In Homo sapiens (Human), this protein is ER degradation-enhancing alpha-mannosidase-like protein 2 (EDEM2).